Reading from the N-terminus, the 231-residue chain is 5'-methylthioadenosine/S-adenosylhomocysteine nucleosidase (231 aa).

Glutamate 12 serves as the catalytic Proton acceptor. Residues glycine 78, methionine 153, and 174 to 175 (ME) contribute to the substrate site. Residue aspartate 198 is the Proton donor of the active site.

It belongs to the PNP/UDP phosphorylase family. MtnN subfamily.

The enzyme catalyses S-adenosyl-L-homocysteine + H2O = S-(5-deoxy-D-ribos-5-yl)-L-homocysteine + adenine. It catalyses the reaction S-methyl-5'-thioadenosine + H2O = 5-(methylsulfanyl)-D-ribose + adenine. It carries out the reaction 5'-deoxyadenosine + H2O = 5-deoxy-D-ribose + adenine. The protein operates within amino-acid biosynthesis; L-methionine biosynthesis via salvage pathway; S-methyl-5-thio-alpha-D-ribose 1-phosphate from S-methyl-5'-thioadenosine (hydrolase route): step 1/2. In terms of biological role, catalyzes the irreversible cleavage of the glycosidic bond in both 5'-methylthioadenosine (MTA) and S-adenosylhomocysteine (SAH/AdoHcy) to adenine and the corresponding thioribose, 5'-methylthioribose and S-ribosylhomocysteine, respectively. Also cleaves 5'-deoxyadenosine, a toxic by-product of radical S-adenosylmethionine (SAM) enzymes, into 5-deoxyribose and adenine. This chain is 5'-methylthioadenosine/S-adenosylhomocysteine nucleosidase, found in Bacillus cereus (strain B4264).